The primary structure comprises 522 residues: Signal transduction histidine-protein kinase/phosphatase MprB (522 aa).

Residues 1 to 30 (MIRLYRPQRPPLRAPLRATPSLSLRWRVML) are Cytoplasmic-facing. A helical transmembrane segment spans residues 31–51 (LAMSMVAMVVVLMAFAVYAVI). Residues 52-167 (SAALYSDIDN…PTEAVMNKLR (116 aa)) lie on the Extracellular side of the membrane. The helical transmembrane segment at 168–188 (WVLLIVGGVGVAVAAVAGGMV) threads the bilayer. At 189 to 522 (TRAGLRPVAR…SVDSQSARAR (334 aa)) the chain is on the cytoplasmic side. Residues 190 to 242 (RAGLRPVARLTEAAERVARTDDLRPIPVFGSDELARLTESFNLMLRALAESRE) form the HAMP domain. The 221-residue stretch at 250–470 (DAGHELRTPL…SFYVLLPGRS (221 aa)) folds into the Histidine kinase domain. The residue at position 253 (histidine 253) is a Phosphohistidine; by autocatalysis. Residues 467-522 (PGRSLPPAGHSTPAGESETDQAEAATDPAVPVAGDTANSRESANVISVDSQSARAR) are disordered. Polar residues predominate over residues 502–522 (TANSRESANVISVDSQSARAR).

It depends on Mg(2+) as a cofactor. The cofactor is Mn(2+). Autophosphorylated.

The protein localises to the cell membrane. The catalysed reaction is ATP + protein L-histidine = ADP + protein N-phospho-L-histidine.. Its function is as follows. Member of the two-component regulatory system MprB/MprA which contributes to maintaining a balance among several systems involved in stress resistance and is required for establishment and maintenance of persistent infection in the host. In response to environmental signals MprB acts both as a membrane-associated protein kinase that undergoes autophosphorylation and subsequently transfers the phosphate to MprA, and a protein phosphatase that dephosphorylates phospho-MprA. This chain is Signal transduction histidine-protein kinase/phosphatase MprB (mprB), found in Mycolicibacterium paratuberculosis (strain ATCC BAA-968 / K-10) (Mycobacterium paratuberculosis).